We begin with the raw amino-acid sequence, 317 residues long: UV DNA damage endonuclease (317 aa).

The protein belongs to the uve1/UvsE family.

Its function is as follows. Component in a DNA repair pathway. Removal of UV LIGHT damaged nucleotides. Recognizes pyrimidine dimers and cleave a phosphodiester bond immediately 5' to the lesion. The polypeptide is UV DNA damage endonuclease (Bacillus anthracis (strain A0248)).